We begin with the raw amino-acid sequence, 781 residues long: Matrix non-peptidase homolog 1 (781 aa).

A signal peptide spans Met-1–Gly-27. Asn-54 carries an N-linked (GlcNAc...) asparagine glycan. Positions Thr-63–Ser-94 are enriched in low complexity. The interval Thr-63–Thr-113 is disordered. 4 N-linked (GlcNAc...) asparagine glycosylation sites follow: Asn-183, Asn-341, Asn-375, and Asn-520.

The protein is Matrix non-peptidase homolog 1 (mnp-1) of Caenorhabditis elegans.